A 417-amino-acid polypeptide reads, in one-letter code: Methyltransferase/ribosomally synthesized cyclic peptide lentinulin A precursor ledMA (417 aa).

The interval 1–251 (METPTLNKSG…GVSTFYIPPK (251 aa)) is methyltransferase domain. Catalysis depends on residues arginine 72, tyrosine 76, and tyrosine 98. Residues tyrosine 98, histidine 100, valine 103, alanine 130, glutamine 172, alanine 213, serine 244, and threonine 245 each contribute to the S-adenosyl-L-methionine site. The interval 252 to 378 (ERKEINVDII…WAFRCAMKEM (127 aa)) is clasp domain. The precursor leader stretch occupies residues 379-399 (PISLLDNAKQSMEEASEQGFP). Position 401 is an N-methylisoleucine (isoleucine 401). Valine 403 and valine 404 each carry N-methylvaline. Glycine 405 carries the post-translational modification N-methylglycine. N-methylvaline occurs at positions 406 and 407. Glycine 408 carries the N-methylglycine modification. Valine 410 carries the N-methylvaline modification. N-methylglycine is present on glycine 411. An N-methylvaline modification is found at valine 413.

The protein in the N-terminal section; belongs to the precorrin methyltransferase family. As to quaternary structure, homodimer. Post-translationally, ledMA automethylates at Ile-401, Val-403, Val-404, Gly-405, Val-406, Val-407, Gly-408, Val-410, Gly-411 and Val-413 before being processed by the prolyloligopeptidase ledP which likely forms a peptidyl ester upon removal of the follower propeptide, which then undergoes macrocyclization with the N-terminus of the modified core peptide. Peptide backbone alpha-N-methylations change the physicochemical properties of amide bonds to provide structural constraints and other favorable characteristics including biological membrane permeability to peptides.

It participates in mycotoxin biosynthesis. In terms of biological role, fusion protein of the methyltransferase ledM and the lentinulin A core peptide; part of the gene cluster that mediates the biosynthesis of lentinulin A, a highly methylated cyclic dodecapeptide with nematodicidal activity. Lentinulin A derives from the C-terminus of the ledMA protein, and it is the ledMA protein that methylates its own C-terminus using S-adenosyl methionine (SAM). The C-terminus is subsequently cleaved off and macrocyclized by the prolyloligopeptidase ledP to give the final product. In Lentinula edodes (Shiitake mushroom), this protein is Methyltransferase/ribosomally synthesized cyclic peptide lentinulin A precursor ledMA.